Reading from the N-terminus, the 336-residue chain is Probable allantoicase (336 aa).

It belongs to the allantoicase family.

The catalysed reaction is allantoate + H2O = (S)-ureidoglycolate + urea. It participates in nitrogen metabolism; (S)-allantoin degradation; (S)-ureidoglycolate from allantoate (aminidohydrolase route): step 1/1. The protein is Probable allantoicase of Acinetobacter baumannii (strain SDF).